Here is a 771-residue protein sequence, read N- to C-terminus: ATP-dependent DNA helicase UvrD1 (771 aa).

Residues 1 to 21 (MSVHATDAKPPGPSPADQLLD) form a disordered region. Residues 21-311 (DGLNPQQRQA…ILLEQNYRST (291 aa)) form the UvrD-like helicase ATP-binding domain. Residues 45-50 (GSGKTA) and Arg-309 contribute to the ATP site. The 292-residue stretch at 312–603 (QNILSAANSV…TLMTLHTAKG (292 aa)) folds into the UvrD-like helicase C-terminal domain. The segment at 691 to 716 (FSAPVSGAGRFGSARPSPTRSGASRR) is disordered.

The protein belongs to the helicase family. UvrD subfamily. As to quaternary structure, monomer. It depends on Mg(2+) as a cofactor.

It catalyses the reaction Couples ATP hydrolysis with the unwinding of duplex DNA by translocating in the 3'-5' direction.. The catalysed reaction is ATP + H2O = ADP + phosphate + H(+). Functionally, DNA-dependent ATPase, acting on dsDNA with a 3'-ssDNA tail, unwinding with 3'-to 5'-polarity. Also highly efficient on nicked DNA. Involved in the post-incision events of nucleotide excision repair. The sequence is that of ATP-dependent DNA helicase UvrD1 (uvrD1) from Mycobacterium bovis (strain ATCC BAA-935 / AF2122/97).